We begin with the raw amino-acid sequence, 162 residues long: Small ribosomal subunit protein uS13 (162 aa).

Residues 142–162 form a disordered region; it reads RGQRTKSTGRRGSTVGVSRKK.

Belongs to the universal ribosomal protein uS13 family. In terms of assembly, part of the 30S ribosomal subunit. Forms a loose heterodimer with protein S19. Forms two bridges to the 50S subunit in the 70S ribosome.

Functionally, located at the top of the head of the 30S subunit, it contacts several helices of the 16S rRNA. In the 70S ribosome it contacts the 23S rRNA (bridge B1a) and protein L5 of the 50S subunit (bridge B1b), connecting the 2 subunits; these bridges are implicated in subunit movement. The chain is Small ribosomal subunit protein uS13 from Methanosarcina acetivorans (strain ATCC 35395 / DSM 2834 / JCM 12185 / C2A).